Consider the following 94-residue polypeptide: Acylphosphatase (94 aa).

The region spanning 8 to 94 is the Acylphosphatase-like domain; it reads TLFIIVHGKV…GRRFKHFAQH (87 aa). Residues arginine 23 and asparagine 41 contribute to the active site. The segment at 69–94 is disordered; it reads PPAASVTELESRREDGGRRFKHFAQH. Positions 77–86 are enriched in basic and acidic residues; the sequence is LESRREDGGR.

Belongs to the acylphosphatase family.

It carries out the reaction an acyl phosphate + H2O = a carboxylate + phosphate + H(+). The polypeptide is Acylphosphatase (acyP) (Bordetella avium (strain 197N)).